Here is a 132-residue protein sequence, read N- to C-terminus: Sodium/calcium exchanger regulatory protein 1 (132 aa).

2 residues coordinate (9Z)-hexadecenoate: Arg126 and Tyr128.

Belongs to the calycin superfamily. Fatty-acid binding protein (FABP) family. As to quaternary structure, interacts with Na(+)/Ca(2+) exchanger NCXSQ1; ReP1-NCXSQ phosphorylation does not affect the interaction. Phosphorylated. Phosphorylation may result in the release of the bound fatty acid. As to expression, expressed in the optic nerve (at protein level).

It is found in the cytoplasm. Its subcellular location is the membrane. Its function is as follows. Binds and may transport fatty acids such as palmitoleate. Also binds poly-phosphoinositides including phosphatidylinositol 4-phosphate (PtdIns(4)P), phosphatidylinositol 4,5-bisphosphate (PtdIns(4,5)P2) and phosphatidylinositol 3,4,5-trisphosphate (PtdIns(3,4,5)P3), and phosphatidic acid. When phosphorylated, stimulates the activity of optic nerve Na(+)/Ca(2+) exchanger. This is Sodium/calcium exchanger regulatory protein 1 from Doryteuthis pealeii (Longfin inshore squid).